A 253-amino-acid chain; its full sequence is uncharacterized protein (253 aa).

The 207-residue stretch at 30 to 236 (AQGRQVAQLW…AVDDDAALMA (207 aa)) folds into the BPL/LPL catalytic domain.

This is an uncharacterized protein from Cupriavidus necator (strain ATCC 17699 / DSM 428 / KCTC 22496 / NCIMB 10442 / H16 / Stanier 337) (Ralstonia eutropha).